Here is a 353-residue protein sequence, read N- to C-terminus: Phosphoribosylformylglycinamidine cyclo-ligase (353 aa).

The protein belongs to the AIR synthase family.

The protein resides in the cytoplasm. It catalyses the reaction 2-formamido-N(1)-(5-O-phospho-beta-D-ribosyl)acetamidine + ATP = 5-amino-1-(5-phospho-beta-D-ribosyl)imidazole + ADP + phosphate + H(+). Its pathway is purine metabolism; IMP biosynthesis via de novo pathway; 5-amino-1-(5-phospho-D-ribosyl)imidazole from N(2)-formyl-N(1)-(5-phospho-D-ribosyl)glycinamide: step 2/2. The sequence is that of Phosphoribosylformylglycinamidine cyclo-ligase from Methylocella silvestris (strain DSM 15510 / CIP 108128 / LMG 27833 / NCIMB 13906 / BL2).